The sequence spans 48 residues: MRKKVVLSCEECKNRNYSTMKDTSSVERLEIKKFCKTCNQHTVHKETK.

Belongs to the bacterial ribosomal protein bL33 family.

In Bacillus anthracis, this protein is Large ribosomal subunit protein bL33A.